The sequence spans 198 residues: Recombination protein RecR (198 aa).

The C4-type zinc-finger motif lies at 57–72 (CSICGNLTDEDPCAIC). The Toprim domain maps to 80 to 175 (STILIVEDSR…KVTRLARGLA (96 aa)).

It belongs to the RecR family.

Its function is as follows. May play a role in DNA repair. It seems to be involved in an RecBC-independent recombinational process of DNA repair. It may act with RecF and RecO. The sequence is that of Recombination protein RecR from Streptococcus gordonii (strain Challis / ATCC 35105 / BCRC 15272 / CH1 / DL1 / V288).